We begin with the raw amino-acid sequence, 1022 residues long: Dihydropyrimidine dehydrogenase [NADP(+)] (1022 aa).

Positions 26–45 (ANVHSTASKKNEKKHWKRNP) are disordered. In terms of domain architecture, 4Fe-4S ferredoxin-type 1 spans 69-100 (ERGALREALRCLKCADAPCQKSCPTNLDIKSF). [4Fe-4S] cluster is bound by residues Cys79, Cys82, Cys87, and Cys91. Residue Val129 participates in FAD binding. Cys130, Cys136, Cys140, and Gln156 together coordinate [4Fe-4S] cluster. FAD contacts are provided by residues 194–198 (GCGPA), 218–226 (EKQKYIGGL), Arg235, and Leu261. NADP(+) is bound by residues 340–343 (AGDT), 364–365 (RK), Arg371, 437–439 (AFG), and 481–487 (DIAGFAN). 480-489 (GDIAGFANTT) contacts FAD. FMN contacts are provided by residues Ser550 and 574–575 (KT). Substrate-binding positions include Asn609 and 668 to 670 (NLS). The Proton acceptor role is filled by Cys671. Residue Lys709 participates in FMN binding. Position 736 to 737 (736 to 737 (NT)) interacts with substrate. FMN is bound by residues Gly767, 793–795 (TGG), and 816–817 (CS). 2 4Fe-4S ferredoxin-type domains span residues 943–975 (VQAL…FDPE) and 976–1006 (THLP…MVSR). The [4Fe-4S] cluster site is built by Cys952, Cys955, Cys958, Cys962, Cys985, Cys988, Cys991, and Cys995.

The protein belongs to the dihydropyrimidine dehydrogenase family. In terms of assembly, homodimer. The cofactor is FAD. FMN is required as a cofactor. [4Fe-4S] cluster serves as cofactor.

The protein localises to the cytoplasm. It carries out the reaction 5,6-dihydrouracil + NADP(+) = uracil + NADPH + H(+). The enzyme catalyses 5,6-dihydrothymine + NADP(+) = thymine + NADPH + H(+). Its pathway is amino-acid biosynthesis; beta-alanine biosynthesis. Functionally, involved in pyrimidine base degradation. Catalyzes the reduction of uracil and thymine. Also involved the degradation of the chemotherapeutic drug 5-fluorouracil. The protein is Dihydropyrimidine dehydrogenase [NADP(+)] (dpyd) of Danio rerio (Zebrafish).